We begin with the raw amino-acid sequence, 381 residues long: Dof zinc finger protein 2 (381 aa).

Positions Met19–Asn81 are disordered. 2 stretches are compositionally biased toward low complexity: residues Ala23–Asn32 and Ser40–Ala59. The segment covering Thr68 to Ala79 has biased composition (basic and acidic residues). The segment at Leu80–Arg134 adopts a Dof-type zinc-finger fold. Residues Cys82, Cys85, Cys107, and Cys110 each coordinate Zn(2+). Residues Ala329–Gly349 form a disordered region.

The protein resides in the nucleus. In terms of biological role, transcription factor that may transactivate seed storage protein genes in developing seeds. The protein is Dof zinc finger protein 2 of Oryza sativa subsp. japonica (Rice).